A 508-amino-acid chain; its full sequence is Serine carboxypeptidase 3 (508 aa).

Positions 1–19 (MVTTPRLVSLLLLLALCAA) are cleaved as a signal peptide. Residues 20–80 (AAGALRLPPD…PGQLLERRVT (61 aa)) constitute a propeptide that is removed on maturation. The interval 48 to 67 (PKDSSSSSGRHGARVGEGNE) is disordered. Blocked amino end (Leu) is present on Leu-81. Cystine bridges form between Cys-133-Cys-373, Cys-301-Cys-316, and Cys-339-Cys-344. An N-linked (GlcNAc...) asparagine glycan is attached at Asn-151. Ser-223 is an active-site residue. Asp-411 is an active-site residue. Cys-414 is a binding site for substrate. Residue His-468 is part of the active site. A propeptide spanning residues 492 to 508 (EAVPEEESSTTSFYAAM) is cleaved from the precursor.

This sequence belongs to the peptidase S10 family. Monomer.

The protein resides in the secreted. The enzyme catalyses Release of a C-terminal amino acid with broad specificity.. Its activity is regulated as follows. Inhibited by mercuric ions. The polypeptide is Serine carboxypeptidase 3 (CBP3) (Hordeum vulgare (Barley)).